The primary structure comprises 491 residues: Cadherin-3 (491 aa).

Cadherin domains lie at 1-102 (ENTV…PPVF), 103-208 (VPPS…DHGP), and 209-314 (VPEP…DPWT). Residues 1–316 (ENTVSHEVQR…VTCRDPWTWG (316 aa)) are Extracellular-facing. Asparagine 228 carries an N-linked (GlcNAc...) asparagine glycan. A helical membrane pass occupies residues 317 to 339 (FLLPILGAALALLLLLLVLLFLV). At 340-491 (RKKRKIKEPL…ADMYGGGQDD (152 aa)) the chain is on the cytoplasmic side.

In terms of assembly, interacts with CDCP1 and CTNNB1.

It localises to the cell membrane. Its function is as follows. Cadherins are calcium-dependent cell adhesion proteins. They preferentially interact with themselves in a homophilic manner in connecting cells; cadherins may thus contribute to the sorting of heterogeneous cell types. This Bos taurus (Bovine) protein is Cadherin-3 (CDH3).